A 324-amino-acid chain; its full sequence is Bacilliredoxin reductase Bdr (324 aa).

C220 is modified (S-bacillithiol cysteine disulfide).

In terms of assembly, interacts with BrxC. FAD is required as a cofactor. Post-translationally, C-terminal Cys can react with bacillithiol (BSH) to form mixed disulfides. S-bacillithiolation protects Cys residues against overoxidation by acting as a redox switch in response to oxidative stress.

In terms of biological role, S-bacillithiolation is the formation of mixed disulfide bonds between protein thiols and the general thiol reductant bacillithiol (BSH) under oxidative stress. BSH is an equivalent of glutathione (GSH) in Firmicutes. This protein is a NADPH-dependent bacilliredoxin reductase, which debacillithiolates (removes BSH) the S-bacillithiolated BrxB (BrxB-SSB), and to a lesser extent BrxC (BrxC-SSB). Involved in a redox cascade increasing the efficacy of BrxB function by reducing BrxB-SSB and thus reactivating it. Has NADPH-dependent oxidase activity under aerobic conditions producing hydrogen peroxide (H(2)O(2)). The chain is Bacilliredoxin reductase Bdr from Bacillus subtilis (strain 168).